A 1082-amino-acid chain; its full sequence is Sodium/potassium exporting P-type ATPase 2 (1082 aa).

At 1 to 75 (MSSINTNVAE…GANTLGDGDK (75 aa)) the chain is on the cytoplasmic side. A helical membrane pass occupies residues 76-96 (ISLTKIIAHQVCNAMILVLII). Over 97-98 (SM) the chain is Extracellular. Residues 99–119 (VIALAIKDWISGGVIGFVVLI) form a helical membrane-spanning segment. The Cytoplasmic segment spans residues 120–308 (NISVGFVQEY…VGTPLQRKLS (189 aa)). A helical membrane pass occupies residues 309–329 (WLAIFLFWGCRYFCNYCNGIP). The Extracellular portion of the chain corresponds to 330–336 (KNRVNKE). The helical transmembrane segment at 337–357 (VAIYAICVALSMIPSALIVVL) threads the bilayer. Over 358–807 (TITMAVGAQV…RMSSNIQKFV (450 aa)) the chain is Cytoplasmic. Catalysis depends on D393, which acts as the 4-aspartylphosphate intermediate. Mg(2+)-binding residues include D393 and T395. ATP contacts are provided by T395, E499, K552, R604, T664, G665, D666, R723, and K729. Mg(2+) is bound at residue D748. Residue N751 coordinates ATP. The helical transmembrane segment at 808–828 (LQLLAENVAQALYLMVGLAFI) threads the bilayer. At 829-832 (DDSG) the chain is on the extracellular side. The helical transmembrane segment at 833–853 (LSVFPLSPVEVLWILVVTSCF) threads the bilayer. The Cytoplasmic portion of the chain corresponds to 854-884 (PAMDLGQERASDDILEESPNSTIFTWEVIID). A helical membrane pass occupies residues 885-905 (MIVYGFWMAVCCLVCFVIIVY). Residues 906-935 (GEGDPYLGVNCNKSSSSNSDVCELVFRGRS) lie on the Extracellular side of the membrane. The helical transmembrane segment at 936–956 (ASFATMTWCALILAWECIHPY) threads the bilayer. Residues 957–983 (NSLFYMRQDTDHPWWKQTVIDLWDNQF) are Cytoplasmic-facing. Residues 984–1004 (LFWSVAIGFISVFPVVYIPVI) traverse the membrane as a helical segment. Topologically, residues 1005 to 1007 (NTK) are extracellular. Residues 1008–1028 (VFLHGPIGYEWGLAVGFSILF) traverse the membrane as a helical segment. The Cytoplasmic segment spans residues 1029–1082 (LAGSELWKWIKRIHKRKANKKAKNPEYELERSDPFKKYASFSRSNTMDRPELMV).

The protein belongs to the cation transport ATPase (P-type) (TC 3.A.3) family. Type IID subfamily. The cofactor is Mg(2+). Post-translationally, the active site is phosphorylated in presence of sodium or potassium and in conditions of higher pH. Not phosphorylated in presence of calcium ions.

It is found in the cell membrane. The catalysed reaction is Na(+)(in) + ATP + H2O = Na(+)(out) + ADP + phosphate + H(+). It carries out the reaction K(+)(in) + ATP + H2O = K(+)(out) + ADP + phosphate + H(+). Functionally, catalyzes the hydrolysis of ATP coupled with the export of sodium and potassium from the cell. May be an inefficient sodium exporter. May transport other cations such as lithium. Sodium/potassium efflux ATPases are involved in salt tolerance and maintaining the membrane potential across the plasma membrane in high salinity (Na+) or alkaline (K+) environments. The polypeptide is Sodium/potassium exporting P-type ATPase 2 (Schwanniomyces occidentalis (Yeast)).